A 317-amino-acid chain; its full sequence is Dimethyladenosine transferase (317 aa).

The tract at residues 1–22 (MAKAPAKKFSGGAQRESAGGEQ) is disordered. Residues H37, L39, G64, E85, D113, and N128 each contribute to the S-adenosyl-L-methionine site.

It belongs to the class I-like SAM-binding methyltransferase superfamily. rRNA adenine N(6)-methyltransferase family.

It carries out the reaction adenosine(1779)/adenosine(1780) in 18S rRNA + 4 S-adenosyl-L-methionine = N(6)-dimethyladenosine(1779)/N(6)-dimethyladenosine(1780) in 18S rRNA + 4 S-adenosyl-L-homocysteine + 4 H(+). Functionally, specifically dimethylates two adjacent adenosines in the loop of a conserved hairpin near the 3'-end of 18S rRNA in the 40S particle. This is Dimethyladenosine transferase (DIM1) from Yarrowia lipolytica (strain CLIB 122 / E 150) (Yeast).